A 283-amino-acid chain; its full sequence is ATP phosphoribosyltransferase (283 aa).

This sequence belongs to the ATP phosphoribosyltransferase family. Long subfamily. Mg(2+) serves as cofactor.

It is found in the cytoplasm. The catalysed reaction is 1-(5-phospho-beta-D-ribosyl)-ATP + diphosphate = 5-phospho-alpha-D-ribose 1-diphosphate + ATP. It participates in amino-acid biosynthesis; L-histidine biosynthesis; L-histidine from 5-phospho-alpha-D-ribose 1-diphosphate: step 1/9. Feedback inhibited by histidine. Its function is as follows. Catalyzes the condensation of ATP and 5-phosphoribose 1-diphosphate to form N'-(5'-phosphoribosyl)-ATP (PR-ATP). Has a crucial role in the pathway because the rate of histidine biosynthesis seems to be controlled primarily by regulation of HisG enzymatic activity. The polypeptide is ATP phosphoribosyltransferase (Bifidobacterium longum (strain DJO10A)).